Reading from the N-terminus, the 99-residue chain is Ferredoxin, vegetative (99 aa).

The 2Fe-2S ferredoxin-type domain maps to 4 to 96; sequence YQVRLINKKR…DCTIRTHQEP (93 aa). 4 residues coordinate [2Fe-2S] cluster: C42, C47, C50, and C80.

Belongs to the 2Fe2S plant-type ferredoxin family. Requires [2Fe-2S] cluster as cofactor.

Its function is as follows. Ferredoxins are iron-sulfur proteins that transfer electrons in a wide variety of metabolic reactions. Donates electrons to the nitrogenase 2. The chain is Ferredoxin, vegetative (fdxH2) from Trichormus variabilis (strain ATCC 29413 / PCC 7937) (Anabaena variabilis).